The following is a 334-amino-acid chain: MSGFGDFTSICETAPLPLCASVGPTLQATGRTGIEPECYARNIELANTIIFEGAASVMHIVALIMTVIMILHVRSKFTAVGRKEILSFFYLYMLLTAMSLIIDAGVAPPGSDPYPYFVSVQNGLSSAVITCLLINGFVGFQLYEDGTPLSVWMMRISSLAAFAISFLVSLATFKSWAGLGPTNTVGLFVVLYLLNAVQLFVYVAMQILLVTRTLQDRWPLGDIAFGIFFFVAGQVLLYAFSSKICIAISHYLDGLFLATVCNLLGVMMVYKYWDSITKEDLEFSVGTRMNNWEVKELLPEEDRRATVFSEDPYAQSSSYDLPYSPGVARYSAKY.

A run of 7 helical transmembrane segments spans residues 49 to 69, 85 to 105, 123 to 143, 159 to 179, 185 to 205, 220 to 240, and 244 to 264; these read IIFE…TVIM, ILSF…IDAG, GLSS…FQLY, LAAF…WAGL, VGLF…YVAM, LGDI…LYAF, and ICIA…CNLL.

The protein belongs to the CHS7 family.

It is found in the endoplasmic reticulum membrane. Chaperone required for the export of the chitin synthase chs3 from the endoplasmic reticulum. Plays a critical role in cell wall integrity and virulence. The protein is Chitin synthase export chaperone of Fusarium oxysporum f. sp. lycopersici (strain 4287 / CBS 123668 / FGSC 9935 / NRRL 34936) (Fusarium vascular wilt of tomato).